The primary structure comprises 120 residues: Secreted RxLR effector protein 29 (120 aa).

The first 21 residues, 1–21 (MRRTAFIVLSLVALIAPCVTS), serve as a signal peptide directing secretion. Positions 47-64 (RHLRSEANGRLAVVDEEK) match the RxLR-dEER motif.

Belongs to the RxLR effector family.

Its subcellular location is the secreted. It localises to the host cytoplasm. It is found in the host nucleus. Functionally, effector that acts as a broad suppressor of cell death to interrupt plant immunity. Inhibits cell death induced by cell death-inducing proteins, including the PAMP elicitor INF1 from P.infestans. This chain is Secreted RxLR effector protein 29, found in Plasmopara viticola (Downy mildew of grapevine).